The chain runs to 302 residues: ATP synthase gamma chain (302 aa).

Belongs to the ATPase gamma chain family. F-type ATPases have 2 components, CF(1) - the catalytic core - and CF(0) - the membrane proton channel. CF(1) has five subunits: alpha(3), beta(3), gamma(1), delta(1), epsilon(1). CF(0) has three main subunits: a, b and c.

The protein resides in the cell membrane. Produces ATP from ADP in the presence of a proton gradient across the membrane. The gamma chain is believed to be important in regulating ATPase activity and the flow of protons through the CF(0) complex. This chain is ATP synthase gamma chain, found in Enterococcus faecalis (strain ATCC 700802 / V583).